Reading from the N-terminus, the 500-residue chain is Cysteine--tRNA ligase (500 aa).

A Zn(2+)-binding site is contributed by Cys30. The 'HIGH' region signature appears at Pro32–Asn42. Zn(2+)-binding residues include Cys224, His263, and Glu267. A 'KMSKS' region motif is present at residues Lys296 to Ser300. Residue Lys299 participates in ATP binding.

It belongs to the class-I aminoacyl-tRNA synthetase family. In terms of assembly, monomer. Zn(2+) is required as a cofactor.

The protein localises to the cytoplasm. It carries out the reaction tRNA(Cys) + L-cysteine + ATP = L-cysteinyl-tRNA(Cys) + AMP + diphosphate. The sequence is that of Cysteine--tRNA ligase from Bartonella bacilliformis (strain ATCC 35685 / KC583 / Herrer 020/F12,63).